Consider the following 748-residue polypeptide: Methylmalonyl-CoA mutase, mitochondrial (748 aa).

The N-terminal 30 residues, 1–30 (MLRAKNQLFLLSPHYLKQLNIPSASRWKRL), are a transit peptide targeting the mitochondrion. Glutamine 48 is a binding site for malonyl-CoA. Residue lysine 87 is modified to N6-acetyllysine. Malonyl-CoA contacts are provided by residues 94–97 (YPTM) and 104–108 (TIRQY). N6-acetyllysine is present on lysine 210. Residues 214–216 (TIQ), arginine 226, lysine 253, histidine 263, and 302–304 (RLS) contribute to the malonyl-CoA site. Lysine 333 is modified (N6-acetyllysine). Lysine 341 carries the N6-succinyllysine modification. Serine 479 is subject to Phosphoserine. Lysine 593 carries the post-translational modification N6-succinyllysine. Lysine 600 is subject to N6-acetyllysine. The B12-binding domain maps to 612 to 744 (RPRLLVAKMG…DDIEKCLAEK (133 aa)). Histidine 625 is a binding site for adenosylcob(III)alamin.

The protein belongs to the methylmalonyl-CoA mutase family. As to quaternary structure, homodimer. Interacts (the apoenzyme form) with MMAA; the interaction is GTP dependent. It depends on adenosylcob(III)alamin as a cofactor.

The protein resides in the mitochondrion matrix. Its subcellular location is the mitochondrion. The protein localises to the cytoplasm. The enzyme catalyses (R)-methylmalonyl-CoA = succinyl-CoA. With respect to regulation, inhibited by itaconyl-CoA, a metabolite that inactivates the coenzyme B12 cofactor. Catalyzes the reversible isomerization of methylmalonyl-CoA (MMCoA) (generated from branched-chain amino acid metabolism and degradation of dietary odd chain fatty acids and cholesterol) to succinyl-CoA (3-carboxypropionyl-CoA), a key intermediate of the tricarboxylic acid cycle. The sequence is that of Methylmalonyl-CoA mutase, mitochondrial (Mmut) from Mus musculus (Mouse).